The primary structure comprises 420 residues: UDP-N-acetylglucosamine 1-carboxyvinyltransferase (420 aa).

A phosphoenolpyruvate-binding site is contributed by 22 to 23 (KN). A UDP-N-acetyl-alpha-D-glucosamine-binding site is contributed by Arg-93. Cys-117 functions as the Proton donor in the catalytic mechanism. Cys-117 is modified (2-(S-cysteinyl)pyruvic acid O-phosphothioketal). Asp-307 and Ile-329 together coordinate UDP-N-acetyl-alpha-D-glucosamine.

The protein belongs to the EPSP synthase family. MurA subfamily.

The protein localises to the cytoplasm. It catalyses the reaction phosphoenolpyruvate + UDP-N-acetyl-alpha-D-glucosamine = UDP-N-acetyl-3-O-(1-carboxyvinyl)-alpha-D-glucosamine + phosphate. It participates in cell wall biogenesis; peptidoglycan biosynthesis. Its function is as follows. Cell wall formation. Adds enolpyruvyl to UDP-N-acetylglucosamine. This is UDP-N-acetylglucosamine 1-carboxyvinyltransferase from Shewanella pealeana (strain ATCC 700345 / ANG-SQ1).